The primary structure comprises 504 residues: Deoxyguanosinetriphosphate triphosphohydrolase (504 aa).

The region spanning 66 to 273 is the HD domain; the sequence is RLTHSLEVQQ…MEAADDISYC (208 aa).

It belongs to the dGTPase family. Type 1 subfamily. In terms of assembly, homotetramer. Mg(2+) serves as cofactor.

The catalysed reaction is dGTP + H2O = 2'-deoxyguanosine + triphosphate + H(+). Functionally, dGTPase preferentially hydrolyzes dGTP over the other canonical NTPs. The polypeptide is Deoxyguanosinetriphosphate triphosphohydrolase (Klebsiella pneumoniae subsp. pneumoniae (strain ATCC 700721 / MGH 78578)).